The chain runs to 560 residues: Protein DETOXIFICATION 45, chloroplastic (560 aa).

The transit peptide at 1–75 directs the protein to the chloroplast; the sequence is MESSRVVVGG…QTNPDCGVVK (75 aa). 12 consecutive transmembrane segments (helical) span residues 109–129, 147–167, 209–229, 250–270, 280–300, 308–328, 353–373, 389–411, 426–446, 466–486, 495–515, and 523–543; these read LVMLSLPAIAGQAIDPLTLLM, VSMAIFNTISKLFNIPLLSVA, ALVLAIGIGIFEALALSLASG, FLVLRALGAPAYVVSLALQGI, PVYCLGIGNFLAVFLFPLFIY, GAAISSVISQYTVAILMLILL, FVLGRTLSVLVTMTVATSMAA, VWLAVSLLTDALASSGQALIASS, FVLKIGVVTGIALAIVLGMSF, GVLFVAATQPITALAFIFDGL, YAACSMMVVGGISSAFMLYAP, and VWVGLSMFMGLRMVAGFSRLM.

The protein belongs to the multi antimicrobial extrusion (MATE) (TC 2.A.66.1) family. Ubiquitous.

The protein resides in the plastid. It is found in the chloroplast membrane. In Arabidopsis thaliana (Mouse-ear cress), this protein is Protein DETOXIFICATION 45, chloroplastic.